A 314-amino-acid polypeptide reads, in one-letter code: Olfactory receptor 9Q2 (314 aa).

The Extracellular segment spans residues 1–25 (MAERNYTVVTEFFLTAFTEHLQWRV). The N-linked (GlcNAc...) asparagine glycan is linked to asparagine 5. The helical transmembrane segment at 26–46 (PLFLIFLSFYLATMLGNTGMI) threads the bilayer. Topologically, residues 47–54 (LLIRGDRR) are cytoplasmic. The chain crosses the membrane as a helical span at residues 55 to 75 (LHTPMYFFLSHLSLVDICYSS). The Extracellular portion of the chain corresponds to 76–99 (AIIPQMLAVLWEHGTTISQARCAA). Cysteines 97 and 189 form a disulfide. The helical transmembrane segment at 100 to 120 (QFFLFTFFASIDCYLLAIMAY) threads the bilayer. The Cytoplasmic segment spans residues 121 to 139 (DRYTAVCQPLLYVTIITEK). A helical transmembrane segment spans residues 140 to 160 (ARWGLVTGAYVAGFFSAFVRT). Residues 161–197 (VTAFTLSFCGNNEINFIFCDLPPLLKLSCGDSYTQEV) are Extracellular-facing. Residues 198–217 (VIIVFALFVMPACILVILVS) form a helical membrane-spanning segment. The Cytoplasmic portion of the chain corresponds to 218 to 237 (YLFIIVAILQIHSAGGRAKT). Residues 238 to 258 (FSTCASHLTAVALFFGTLIFM) form a helical membrane-spanning segment. At 259–271 (YLRDNTGQSSEGD) the chain is on the extracellular side. A helical transmembrane segment spans residues 272 to 292 (RVVSVLYTVVTPMLNPLIYSL). Residues 293–314 (RNKEVKEATRKALSKSKPARRP) are Cytoplasmic-facing.

It belongs to the G-protein coupled receptor 1 family.

Its subcellular location is the cell membrane. Odorant receptor. This Homo sapiens (Human) protein is Olfactory receptor 9Q2 (OR9Q2).